The sequence spans 171 residues: Translationally-controlled tumor protein homolog (171 aa).

Residues 1 to 171 (MKIWKDVFTG…FKHGLEEEKF (171 aa)) enclose the TCTP domain.

Belongs to the TCTP family.

The protein localises to the cytoplasm. Involved in calcium binding and microtubule stabilization. The polypeptide is Translationally-controlled tumor protein homolog (Anopheles gambiae (African malaria mosquito)).